A 102-amino-acid polypeptide reads, in one-letter code: Cytochrome c-553 (102 aa).

An N-terminal signal peptide occupies residues 1 to 23 (MKRILVVMSICAALAFGVSAAMA). Heme c contacts are provided by Cys-33, Cys-36, His-37, and Met-80.

Binds 1 heme c group covalently per subunit.

It localises to the periplasm. Its function is as follows. Natural electron acceptor for a formate dehydrogenase. The chain is Cytochrome c-553 from Nitratidesulfovibrio vulgaris (strain DSM 19637 / Miyazaki F) (Desulfovibrio vulgaris).